A 367-amino-acid chain; its full sequence is Chorismate synthase (367 aa).

NADP(+) contacts are provided by Arg48 and Arg54. FMN is bound by residues 125–127, 238–239, Gly278, 293–297, and Arg319; these read RSS, NA, and KPTSS.

It belongs to the chorismate synthase family. Homotetramer. Requires FMNH2 as cofactor.

The catalysed reaction is 5-O-(1-carboxyvinyl)-3-phosphoshikimate = chorismate + phosphate. Its pathway is metabolic intermediate biosynthesis; chorismate biosynthesis; chorismate from D-erythrose 4-phosphate and phosphoenolpyruvate: step 7/7. In terms of biological role, catalyzes the anti-1,4-elimination of the C-3 phosphate and the C-6 proR hydrogen from 5-enolpyruvylshikimate-3-phosphate (EPSP) to yield chorismate, which is the branch point compound that serves as the starting substrate for the three terminal pathways of aromatic amino acid biosynthesis. This reaction introduces a second double bond into the aromatic ring system. This chain is Chorismate synthase, found in Stenotrophomonas maltophilia (strain K279a).